The sequence spans 947 residues: Beta-glucosidase (947 aa).

Asp696 is a catalytic residue.

This sequence belongs to the glycosyl hydrolase 3 family.

The enzyme catalyses Hydrolysis of terminal, non-reducing beta-D-glucosyl residues with release of beta-D-glucose.. The protein operates within glycan metabolism; cellulose degradation. This Ruminococcus albus protein is Beta-glucosidase.